Consider the following 258-residue polypeptide: MSEKLVAVDIGNTSVNIGIFEGEKLLANWHLGSVAQRMADEYASLLLGLLQHAGIHPEELNRVIMCSVVPPLTTTFEEVFKSYFKAAPLVVGAGIKSGVKVRMDNPREVGADRIVNAAAARVLYPGACIIVDMGTATTFDTLSEGGAYIGGAIAPGIATSAQAIAEKTSKLPKIEIIRPAKVIGSNTVSAMQSGIYFGYIGLVEELVRRIQTELGQKTRVVATGGYAALIAEGSRIFDIVRPDLTLQGLRIIYQMNQA.

Residue 9 to 16 (DIGNTSVN) participates in ATP binding. 110 to 113 (GADR) lines the substrate pocket. Residue aspartate 112 is the Proton acceptor of the active site. Aspartate 132 contributes to the K(+) binding site. Residue threonine 135 coordinates ATP. Threonine 187 serves as a coordination point for substrate.

This sequence belongs to the type III pantothenate kinase family. In terms of assembly, homodimer. The cofactor is NH4(+). K(+) serves as cofactor.

It localises to the cytoplasm. It carries out the reaction (R)-pantothenate + ATP = (R)-4'-phosphopantothenate + ADP + H(+). Its pathway is cofactor biosynthesis; coenzyme A biosynthesis; CoA from (R)-pantothenate: step 1/5. In terms of biological role, catalyzes the phosphorylation of pantothenate (Pan), the first step in CoA biosynthesis. This is Type III pantothenate kinase from Dehalococcoides mccartyi (strain ATCC BAA-2266 / KCTC 15142 / 195) (Dehalococcoides ethenogenes (strain 195)).